The following is a 274-amino-acid chain: MAKITAAEVNKLRKATGAGMMDCKKALVEAEGDFDGAIELLRKKGQKVAAKRADRDSSEGAAIAQVNGDNTKGVIISLNCETDFVAKNDDFIKMANNFAEIALNYSSKEEFLKADYKGISVEDKLTEQTGVIGEKIEIGAFRTLEAPFVGSYIHAGNKIAVLTGLSKSVDGAEEAAKNVSMQAAAMNPVALNEEGVDQGTIDKEIEIAKDTLREEGKPENMLDKIAQGKLQRFFKDNTLVHQAYIKDNKQSVADYVKTVDGALEVVAFERVALG.

The tract at residues 82-85 (TDFV) is involved in Mg(2+) ion dislocation from EF-Tu.

The protein belongs to the EF-Ts family.

The protein localises to the cytoplasm. In terms of biological role, associates with the EF-Tu.GDP complex and induces the exchange of GDP to GTP. It remains bound to the aminoacyl-tRNA.EF-Tu.GTP complex up to the GTP hydrolysis stage on the ribosome. The chain is Elongation factor Ts from Christiangramia forsetii (strain DSM 17595 / CGMCC 1.15422 / KT0803) (Gramella forsetii).